A 364-amino-acid chain; its full sequence is Fructose-bisphosphate aldolase B (364 aa).

2 residues coordinate substrate: Arg56 and Lys147. Glu188 (proton acceptor) is an active-site residue. The Schiff-base intermediate with dihydroxyacetone-P role is filled by Lys230.

This sequence belongs to the class I fructose-bisphosphate aldolase family. As to quaternary structure, homotetramer.

The protein localises to the cytoplasm. The protein resides in the cytoskeleton. It localises to the microtubule organizing center. Its subcellular location is the centrosome. It is found in the centriolar satellite. The enzyme catalyses beta-D-fructose 1,6-bisphosphate = D-glyceraldehyde 3-phosphate + dihydroxyacetone phosphate. It functions in the pathway carbohydrate degradation; glycolysis; D-glyceraldehyde 3-phosphate and glycerone phosphate from D-glucose: step 4/4. The polypeptide is Fructose-bisphosphate aldolase B (aldob) (Sparus aurata (Gilthead sea bream)).